Here is a 93-residue protein sequence, read N- to C-terminus: U12-lycotoxin-Ls1a (93 aa).

The first 18 residues, 1 to 18 (MKFAVILLFSLVVLTVAS), serve as a signal peptide directing secretion. The propeptide occupies 19 to 38 (ESVEEVRREIDIEDLPEQQR).

It belongs to the neurotoxin 31 family. Contains 5 disulfide bonds. Expressed by the venom gland.

Its subcellular location is the secreted. This is U12-lycotoxin-Ls1a from Lycosa singoriensis (Wolf spider).